The primary structure comprises 275 residues: Dihydroxyacetone phosphatase (275 aa).

Catalysis depends on Asp-10, which acts as the Nucleophile. Residues Asp-10, Asp-12, and Asp-206 each contribute to the Mg(2+) site. Asp-12 acts as the Proton donor/acceptor in catalysis.

Belongs to the HAD-like hydrolase superfamily. In terms of assembly, homohexamer. Mg(2+) is required as a cofactor.

The catalysed reaction is dihydroxyacetone phosphate + H2O = dihydroxyacetone + phosphate. Catalyzes dephosphorylation of dihydroxyacetone phosphate (DHAP) to produce 1,3-dihydroxyacetone (DHA). Is the main enzyme responsible for DHA production from catabolism of sugars (glucose, fructose, and sucrose) in C.glutamicum. Displays no activity toward nucleoside monophosphates (AMP, CMP, GMP, or UMP). The chain is Dihydroxyacetone phosphatase from Corynebacterium glutamicum (strain R).